Here is a 440-residue protein sequence, read N- to C-terminus: Xylose isomerase (440 aa).

Active-site residues include histidine 100 and aspartate 103. Residues glutamate 231, glutamate 267, histidine 270, aspartate 295, aspartate 306, aspartate 308, and aspartate 338 each contribute to the Mg(2+) site.

It belongs to the xylose isomerase family. In terms of assembly, homotetramer. Mg(2+) is required as a cofactor.

It is found in the cytoplasm. It catalyses the reaction alpha-D-xylose = alpha-D-xylulofuranose. This is Xylose isomerase from Burkholderia vietnamiensis (strain G4 / LMG 22486) (Burkholderia cepacia (strain R1808)).